A 279-amino-acid polypeptide reads, in one-letter code: Ribosomal RNA small subunit methyltransferase A (279 aa).

Residues asparagine 28, leucine 30, glycine 55, glutamate 77, aspartate 103, and asparagine 122 each contribute to the S-adenosyl-L-methionine site.

Belongs to the class I-like SAM-binding methyltransferase superfamily. rRNA adenine N(6)-methyltransferase family. RsmA subfamily.

The protein localises to the cytoplasm. The enzyme catalyses adenosine(1518)/adenosine(1519) in 16S rRNA + 4 S-adenosyl-L-methionine = N(6)-dimethyladenosine(1518)/N(6)-dimethyladenosine(1519) in 16S rRNA + 4 S-adenosyl-L-homocysteine + 4 H(+). Functionally, specifically dimethylates two adjacent adenosines (A1518 and A1519) in the loop of a conserved hairpin near the 3'-end of 16S rRNA in the 30S particle. May play a critical role in biogenesis of 30S subunits. This chain is Ribosomal RNA small subunit methyltransferase A, found in Ruegeria pomeroyi (strain ATCC 700808 / DSM 15171 / DSS-3) (Silicibacter pomeroyi).